Reading from the N-terminus, the 1072-residue chain is Carbamoyl phosphate synthase large chain (1072 aa).

The interval Met-1 to Glu-401 is carboxyphosphate synthetic domain. 12 residues coordinate ATP: Arg-129, Arg-169, Gly-175, Gly-176, Lys-208, Leu-210, Glu-215, Gly-241, Val-242, His-243, Gln-284, and Glu-298. The ATP-grasp 1 domain maps to Lys-133–Ile-327. Residues Gln-284, Glu-298, and Asn-300 each coordinate Mg(2+). Gln-284, Glu-298, and Asn-300 together coordinate Mn(2+). The segment at Ile-402–Asp-544 is oligomerization domain. Positions Glu-545–Gly-929 are carbamoyl phosphate synthetic domain. Residues Ser-671–Leu-861 enclose the ATP-grasp 2 domain. Residues Arg-707, Lys-746, Ile-748, Glu-752, Gly-777, Val-778, His-779, Ser-780, Gln-820, and Glu-832 each coordinate ATP. Residues Gln-820, Glu-832, and Asn-834 each coordinate Mg(2+). Gln-820, Glu-832, and Asn-834 together coordinate Mn(2+). The MGS-like domain maps to Leu-930–Leu-1072. Residues Leu-930–Leu-1072 are allosteric domain.

It belongs to the CarB family. Composed of two chains; the small (or glutamine) chain promotes the hydrolysis of glutamine to ammonia, which is used by the large (or ammonia) chain to synthesize carbamoyl phosphate. Tetramer of heterodimers (alpha,beta)4. Mg(2+) is required as a cofactor. The cofactor is Mn(2+).

It catalyses the reaction hydrogencarbonate + L-glutamine + 2 ATP + H2O = carbamoyl phosphate + L-glutamate + 2 ADP + phosphate + 2 H(+). The enzyme catalyses hydrogencarbonate + NH4(+) + 2 ATP = carbamoyl phosphate + 2 ADP + phosphate + 2 H(+). It participates in amino-acid biosynthesis; L-arginine biosynthesis; carbamoyl phosphate from bicarbonate: step 1/1. Its pathway is pyrimidine metabolism; UMP biosynthesis via de novo pathway; (S)-dihydroorotate from bicarbonate: step 1/3. Its function is as follows. Large subunit of the glutamine-dependent carbamoyl phosphate synthetase (CPSase). CPSase catalyzes the formation of carbamoyl phosphate from the ammonia moiety of glutamine, carbonate, and phosphate donated by ATP, constituting the first step of 2 biosynthetic pathways, one leading to arginine and/or urea and the other to pyrimidine nucleotides. The large subunit (synthetase) binds the substrates ammonia (free or transferred from glutamine from the small subunit), hydrogencarbonate and ATP and carries out an ATP-coupled ligase reaction, activating hydrogencarbonate by forming carboxy phosphate which reacts with ammonia to form carbamoyl phosphate. The sequence is that of Carbamoyl phosphate synthase large chain from Caldanaerobacter subterraneus subsp. tengcongensis (strain DSM 15242 / JCM 11007 / NBRC 100824 / MB4) (Thermoanaerobacter tengcongensis).